Consider the following 128-residue polypeptide: Fruiting body differentiation protein 16 (128 aa).

The first 19 residues, M1–A19, serve as a signal peptide directing secretion.

In terms of biological role, plays a role in the regulation of fruiting body development. This chain is Fruiting body differentiation protein 16, found in Flammulina velutipes (Agaricus velutipes).